A 181-amino-acid polypeptide reads, in one-letter code: UPF0398 protein LMOf2365_1918 (181 aa).

This sequence belongs to the UPF0398 family.

The sequence is that of UPF0398 protein LMOf2365_1918 from Listeria monocytogenes serotype 4b (strain F2365).